Reading from the N-terminus, the 148-residue chain is Deoxyuridine 5'-triphosphate nucleotidohydrolase (148 aa).

This sequence belongs to the dUTPase family. It depends on Mg(2+) as a cofactor.

The enzyme catalyses dUTP + H2O = dUMP + diphosphate + H(+). The protein operates within pyrimidine metabolism; dUMP biosynthesis; dUMP from dCTP (dUTP route): step 2/2. In terms of biological role, this enzyme decreases the intracellular concentration of dUTP so that uracil cannot be incorporated into viral progeny DNA. This activity is sufficient to exclude uracil from the DNA during phage replication. In the case of dUTPase mutant phages, the host dUTPase activity is not sufficient to exclude uracil from T5 DNA and uracil are incorporated, leading to decreased phage viability. The protein is Deoxyuridine 5'-triphosphate nucleotidohydrolase (DUT) of Escherichia coli (Enterobacteria phage T5).